The sequence spans 439 residues: MNHKVGFVSLGCPKALVDSERIITQLKAQGYELVPTYEDAGVVVINTCGFIDSAVQESLDTIKEAMAENGRVIVTGCLGAKADVIKNACPDVLHISGAHAYEEVVNAVHQHLPPPADPFTQLIPPQGIKLTPRHYAYLKISEGCNQKCTFCIIPTMRGKLQSYPMAQILTEAKKLKQAGVKELLVISQDTSAYGVDTRYQQIEWQGKTVNTRFYDLCEQLGELGIWVRLHYVYPYPHVDDIVPLMRDGLILPYLDIPLQHANSRILKAMKRPASSENTLLRIASWREICPDITLRSTFIVGFPGETEEEFSELLAFLKEAQLDRVGCFKYSPVEGAKANDLDNPVSEDIKEERYHRFMQVQAEISRNKLKNKIGSTQTVLIDEITEDQIIARSKSDAPEIDGLVYLPKISGITVGSFAEAMITDSDDYDLYGDLEYSLA.

Residues 3 to 113 enclose the MTTase N-terminal domain; the sequence is HKVGFVSLGC…VVNAVHQHLP (111 aa). Positions 12, 48, 77, 144, 148, and 151 each coordinate [4Fe-4S] cluster. A Radical SAM core domain is found at 130-367; the sequence is LTPRHYAYLK…MQVQAEISRN (238 aa). In terms of domain architecture, TRAM spans 370 to 436; that stretch reads KNKIGSTQTV…DYDLYGDLEY (67 aa).

Belongs to the methylthiotransferase family. RimO subfamily. [4Fe-4S] cluster is required as a cofactor.

It localises to the cytoplasm. The catalysed reaction is L-aspartate(89)-[ribosomal protein uS12]-hydrogen + (sulfur carrier)-SH + AH2 + 2 S-adenosyl-L-methionine = 3-methylsulfanyl-L-aspartate(89)-[ribosomal protein uS12]-hydrogen + (sulfur carrier)-H + 5'-deoxyadenosine + L-methionine + A + S-adenosyl-L-homocysteine + 2 H(+). Its function is as follows. Catalyzes the methylthiolation of an aspartic acid residue of ribosomal protein uS12. This chain is Ribosomal protein uS12 methylthiotransferase RimO, found in Legionella pneumophila (strain Paris).